Here is a 136-residue protein sequence, read N- to C-terminus: MQRFPYSLLLLLLSATNRSRRHHITRPGRSIHWCLVRPTRPNRMLRAIRTCGARYWRNWPLNWPRKAGLTRRSSARIGLSDALRPCPTLFGCFKRRYARQAMSCYCRTEWRVNWLKKKRRGSSRWRRESSVWRCWK.

The signal sequence occupies residues 1 to 21 (MQRFPYSLLLLLLSATNRSRR). The RxLR signature appears at 43 to 46 (RMLR).

The protein belongs to the RxLR effector family.

It localises to the secreted. The protein resides in the host nucleus. Effector that partially suppresses the tobacco programmed cell death induced by cell death-inducing proteins. The polypeptide is Secreted RxLR effector protein 63 (Plasmopara viticola (Downy mildew of grapevine)).